Reading from the N-terminus, the 688-residue chain is Protein sel-1 homolog 2 (688 aa).

An N-terminal signal peptide occupies residues Met1 to Thr18. Topologically, residues Lys19–Thr662 are extracellular. N-linked (GlcNAc...) asparagine glycosylation is present at Asn34. 11 Sel1-like repeats span residues Gly107–Asn142, Leu143–Ser178, Tyr179–Ser214, Met215–Ala250, Val297–Ser333, Ala334–Asn370, Ala371–Trp406, Pro407–Gln442, Pro443–His478, Ala551–His586, and Ala588–Pro623. N-linked (GlcNAc...) asparagine glycosylation is present at Asn162. Residues Val663–Leu683 traverse the membrane as a helical segment. Over Arg684–Arg688 the chain is Cytoplasmic.

This sequence belongs to the sel-1 family.

It localises to the membrane. The protein resides in the cell projection. The protein localises to the cilium. It is found in the nucleus speckle. The polypeptide is Protein sel-1 homolog 2 (Sel1l2) (Mus musculus (Mouse)).